We begin with the raw amino-acid sequence, 443 residues long: Histidinol dehydrogenase (443 aa).

NAD(+) is bound by residues Tyr-127, Gln-185, and Asn-208. Ser-234, Gln-256, and His-259 together coordinate substrate. Zn(2+) is bound by residues Gln-256 and His-259. Active-site proton acceptor residues include Glu-323 and His-324. Substrate-binding residues include His-324, Asp-357, Glu-411, and His-416. Position 357 (Asp-357) interacts with Zn(2+). His-416 contacts Zn(2+).

It belongs to the histidinol dehydrogenase family. Zn(2+) is required as a cofactor.

The catalysed reaction is L-histidinol + 2 NAD(+) + H2O = L-histidine + 2 NADH + 3 H(+). It participates in amino-acid biosynthesis; L-histidine biosynthesis; L-histidine from 5-phospho-alpha-D-ribose 1-diphosphate: step 9/9. Functionally, catalyzes the sequential NAD-dependent oxidations of L-histidinol to L-histidinaldehyde and then to L-histidine. In Photobacterium profundum (strain SS9), this protein is Histidinol dehydrogenase.